The chain runs to 329 residues: uncharacterized protein (329 aa).

Residues Pro-27 to Lys-185 form the Nudix hydrolase domain. 3 consecutive transmembrane segments (helical) span residues Val-123–Leu-143, Pro-227–Ser-247, and Leu-303–Ile-323.

Its subcellular location is the membrane. This is an uncharacterized protein from Schizosaccharomyces pombe (strain 972 / ATCC 24843) (Fission yeast).